The following is a 406-amino-acid chain: Nicotinate phosphoribosyltransferase (406 aa).

H225 bears the Phosphohistidine; by autocatalysis mark.

Belongs to the NAPRTase family. In terms of processing, transiently phosphorylated on a His residue during the reaction cycle. Phosphorylation strongly increases the affinity for substrates and increases the rate of nicotinate D-ribonucleotide production. Dephosphorylation regenerates the low-affinity form of the enzyme, leading to product release.

It carries out the reaction nicotinate + 5-phospho-alpha-D-ribose 1-diphosphate + ATP + H2O = nicotinate beta-D-ribonucleotide + ADP + phosphate + diphosphate. Its pathway is cofactor biosynthesis; NAD(+) biosynthesis; nicotinate D-ribonucleotide from nicotinate: step 1/1. Functionally, catalyzes the synthesis of beta-nicotinate D-ribonucleotide from nicotinate and 5-phospho-D-ribose 1-phosphate at the expense of ATP. This Psychromonas ingrahamii (strain DSM 17664 / CCUG 51855 / 37) protein is Nicotinate phosphoribosyltransferase.